We begin with the raw amino-acid sequence, 145 residues long: D-aminoacyl-tRNA deacylase (145 aa).

Positions 137–138 (GP) match the Gly-cisPro motif, important for rejection of L-amino acids motif.

This sequence belongs to the DTD family. Homodimer.

It localises to the cytoplasm. The catalysed reaction is glycyl-tRNA(Ala) + H2O = tRNA(Ala) + glycine + H(+). It catalyses the reaction a D-aminoacyl-tRNA + H2O = a tRNA + a D-alpha-amino acid + H(+). In terms of biological role, an aminoacyl-tRNA editing enzyme that deacylates mischarged D-aminoacyl-tRNAs. Also deacylates mischarged glycyl-tRNA(Ala), protecting cells against glycine mischarging by AlaRS. Acts via tRNA-based rather than protein-based catalysis; rejects L-amino acids rather than detecting D-amino acids in the active site. By recycling D-aminoacyl-tRNA to D-amino acids and free tRNA molecules, this enzyme counteracts the toxicity associated with the formation of D-aminoacyl-tRNA entities in vivo and helps enforce protein L-homochirality. This Rhodopirellula baltica (strain DSM 10527 / NCIMB 13988 / SH1) protein is D-aminoacyl-tRNA deacylase.